The sequence spans 69 residues: U-Asilidin(12)-Dg3a (69 aa).

The N-terminal stretch at 1–19 (MRFLNIFLFFAAIIAFATA) is a signal peptide. Residues 20–33 (SQVFEEDEIDMEPR) constitute a propeptide that is removed on maturation. 3 disulfide bridges follow: Cys36–Cys59, Cys45–Cys65, and Cys49–Cys67.

The protein belongs to the asilidin-12 family. Expressed by the venom gland.

Its subcellular location is the secreted. Moderately increases Kv11.1/KCNH2/ERG1 currents and shifts the voltage-dependence of the channel activation to hyperpolarised potentials. In vivo, induces neurotoxic effects when injected into insects (tested on L.cuprina and A.domesticus). The protein is U-Asilidin(12)-Dg3a of Dolopus genitalis (Giant Australian assassin fly).